The following is a 404-amino-acid chain: MNKQIQTEADELGFFGEYGGQYVPETLMPAIIELKKAYKEAKADPEFQRELEYYLSEYVGRATPLTYAASYTESLGGAKIYLKREDLNHTGAHKINNALGQALLAKRMGKKKLVAETGAGQHGVASATVAALFDMELVVFMGSEDIKRQQLNVFRMELLGAKVVAVEEGQGTLSDAVNKALQYWVSHVDDTHYLLGSALGPDPFPTIVRDFQSVIGKEIKSQILKKEGRLPDAIVACIGGGSNAIGTFYPFIKDDVALYGVEAAGQGEDTDKHALAIGKGSPGVLHGTKMYLIQDEGGQVQLAHSISAGLDYPGIGPEHSYYHDIGRVTFENASDTQAMNALINFTKHEGIIPAIESAHALSYVERLAPTMSKEDIIVVTISGRGDKDMETIRQYMAERGLAND.

An N6-(pyridoxal phosphate)lysine modification is found at Lys-94.

This sequence belongs to the TrpB family. In terms of assembly, tetramer of two alpha and two beta chains. The cofactor is pyridoxal 5'-phosphate.

The catalysed reaction is (1S,2R)-1-C-(indol-3-yl)glycerol 3-phosphate + L-serine = D-glyceraldehyde 3-phosphate + L-tryptophan + H2O. Its pathway is amino-acid biosynthesis; L-tryptophan biosynthesis; L-tryptophan from chorismate: step 5/5. Its function is as follows. The beta subunit is responsible for the synthesis of L-tryptophan from indole and L-serine. This is Tryptophan synthase beta chain from Staphylococcus aureus (strain JH1).